The chain runs to 359 residues: GDSL esterase/lipase At2g30310 (359 aa).

An N-terminal signal peptide occupies residues 1–28 (MSTSKTIVFGLFVATLLVSCNVAANATT). Serine 41 (nucleophile) is an active-site residue. Asparagine 103 and asparagine 325 each carry an N-linked (GlcNAc...) asparagine glycan. Catalysis depends on residues aspartate 333 and histidine 336.

The protein belongs to the 'GDSL' lipolytic enzyme family.

The protein resides in the secreted. The protein is GDSL esterase/lipase At2g30310 of Arabidopsis thaliana (Mouse-ear cress).